The following is a 127-amino-acid chain: Aspartate 1-decarboxylase (127 aa).

Ser-25 (schiff-base intermediate with substrate; via pyruvic acid) is an active-site residue. Ser-25 is subject to Pyruvic acid (Ser). Thr-57 serves as a coordination point for substrate. The active-site Proton donor is the Tyr-58. Position 73-75 (73-75 (GSA)) interacts with substrate.

It belongs to the PanD family. As to quaternary structure, heterooctamer of four alpha and four beta subunits. It depends on pyruvate as a cofactor. Post-translationally, is synthesized initially as an inactive proenzyme, which is activated by self-cleavage at a specific serine bond to produce a beta-subunit with a hydroxyl group at its C-terminus and an alpha-subunit with a pyruvoyl group at its N-terminus.

Its subcellular location is the cytoplasm. The catalysed reaction is L-aspartate + H(+) = beta-alanine + CO2. It participates in cofactor biosynthesis; (R)-pantothenate biosynthesis; beta-alanine from L-aspartate: step 1/1. Functionally, catalyzes the pyruvoyl-dependent decarboxylation of aspartate to produce beta-alanine. The chain is Aspartate 1-decarboxylase from Laribacter hongkongensis (strain HLHK9).